A 651-amino-acid polypeptide reads, in one-letter code: Carboxypeptidase S1 homolog A (651 aa).

The first 19 residues, 1–19, serve as a signal peptide directing secretion; that stretch reads MHLATGLAVALPFIGAASA. Cys50 and Cys121 form a disulfide bridge. Residues Asn77, Asn125, Asn128, Asn161, Asn184, and Asn202 are each glycosylated (N-linked (GlcNAc...) asparagine). Ser238 is an active-site residue. 5 N-linked (GlcNAc...) asparagine glycosylation sites follow: Asn260, Asn299, Asn308, Asn347, and Asn410. Intrachain disulfides connect Cys325-Cys361 and Cys332-Cys354. Asp458 is an active-site residue. A substrate-binding site is contributed by Cys461. Residues Asn474 and Asn504 are each glycosylated (N-linked (GlcNAc...) asparagine). His515 is an active-site residue. Glu516 contributes to the substrate binding site. Residues 604–630 form a disordered region; it reads KSPAGKKQGPPPTSTSPPSPTSSSEGS. Residues 612 to 623 show a composition bias toward pro residues; that stretch reads GPPPTSTSPPSP. The GPI-anchor amidated serine moiety is linked to residue Ser625. Residues 626–651 constitute a propeptide, removed in mature form; the sequence is SSEGSVKEFSVSVLGVSVLAAITFFL.

This sequence belongs to the peptidase S10 family.

The protein localises to the cell membrane. It catalyses the reaction Preferential release of a C-terminal arginine or lysine residue.. Its function is as follows. Extracellular serine carboxypeptidase that contributes to pathogenicity. In Arthroderma otae (strain ATCC MYA-4605 / CBS 113480) (Microsporum canis), this protein is Carboxypeptidase S1 homolog A (SCPA).